Consider the following 1097-residue polypeptide: Transmembrane protein 132D (1097 aa).

A signal peptide spans 1-30 (MCPSEMGTLWYLWSPVLISLAALFSKVTEG). At 31–913 (RGILESIQRF…LDQAAKGLSD (883 aa)) the chain is on the extracellular side. Residues 233–245 (DERGDCAKEDSRK) show a composition bias toward basic and acidic residues. Residues 233 to 263 (DERGDCAKEDSRKSGGTPAGHNDVDESSPPL) are disordered. A helical transmembrane segment spans residues 914–934 (LEIGMYALLGVFCLAILVFLI). Over 935-1097 (NCVTFALKYR…SCMERLHEHV (163 aa)) the chain is Cytoplasmic. The disordered stretch occupies residues 1021–1042 (MLTDDQEQKSEPPTSPTSKRKR).

This sequence belongs to the TMEM132 family. In terms of tissue distribution, expressed in mature oligodendrocytes in the white and gray matter of the brain.

It localises to the membrane. In terms of biological role, regulates neuronal morphology via inhibition of the WAVE regulatory complex (WCR), a complex that controls F-actin cytoskeletal dynamics. The protein is Transmembrane protein 132D (Tmem132d) of Mus musculus (Mouse).